A 1163-amino-acid polypeptide reads, in one-letter code: Putative beta-glucuronidase (1163 aa).

Positions 1 to 20 are cleaved as a signal peptide; it reads MPRFLKYILGLFLISISAFG.

The protein belongs to the glycosyl hydrolase 2 family.

The protein localises to the periplasm. The enzyme catalyses a beta-D-glucuronoside + H2O = D-glucuronate + an alcohol. Its function is as follows. Glycoside hydrolase involved in ulvan degradation. Ulvan is the main polysaccharide component of the Ulvales (green seaweed) cell wall. It is composed of disaccharide building blocks comprising 3-sulfated rhamnose (Rha3S) linked to D-glucuronic acid (GlcA), L-iduronic acid (IduA), or D-xylose (Xyl). This Formosa agariphila (strain DSM 15362 / KCTC 12365 / LMG 23005 / KMM 3901 / M-2Alg 35-1) protein is Putative beta-glucuronidase.